Here is a 354-residue protein sequence, read N- to C-terminus: UPF0283 membrane protein HI_0043 (354 aa).

3 helical membrane passes run 57 to 77, 87 to 107, and 211 to 231; these read LLKF…VQWI, IYLA…KEII, and ESAV…FIAW.

It belongs to the UPF0283 family.

Its subcellular location is the cell inner membrane. The polypeptide is UPF0283 membrane protein HI_0043 (Haemophilus influenzae (strain ATCC 51907 / DSM 11121 / KW20 / Rd)).